The chain runs to 309 residues: ATP-dependent Clp protease proteolytic subunit 3, chloroplastic (309 aa).

Residues 1–70 (MEMSLRLASS…WDVSSFSIDS (70 aa)) constitute a chloroplast transit peptide. Val71 bears the N-acetylvaline mark. Catalysis depends on Ser164, which acts as the Nucleophile. His189 is a catalytic residue. Residue Thr194 is modified to Phosphothreonine. A disordered region spans residues 290 to 309 (DNTNLPSERSMTQNGYAAIE). The segment covering 292–309 (TNLPSERSMTQNGYAAIE) has biased composition (polar residues).

Belongs to the peptidase S14 family. As to quaternary structure, component of the chloroplastic Clp protease core complex which consist of at least 16 proteins: CLPP4 (3 copies), CLPP5 (3 copies), CLPR4 (2 copies), ClpP1 (1 copy), CLPP6 (1 copy), CLPR2 (1 copy), CLPT1 (1 copy), CLPT2 (1 copy) and 3 copies of CLPP3 and/or CLPR1 and/or CLPR3. The core complex is organized in two heptameric rings, one containing CLPP3,4,5,6 in a 1:2:3:1 ratio and the other CLPP1 and CLPR1,2,3,4 in a 3:1:1:1:1 ratio. Interacts with CHIP. In terms of processing, ubiquitinated in vitro by CHIP. In terms of tissue distribution, mostly expressed in leaves. Also detected in stems, and to a lower extent, in roots (at protein level).

Its subcellular location is the plastid. The protein localises to the chloroplast stroma. It carries out the reaction Hydrolysis of proteins to small peptides in the presence of ATP and magnesium. alpha-casein is the usual test substrate. In the absence of ATP, only oligopeptides shorter than five residues are hydrolyzed (such as succinyl-Leu-Tyr-|-NHMec, and Leu-Tyr-Leu-|-Tyr-Trp, in which cleavage of the -Tyr-|-Leu- and -Tyr-|-Trp bonds also occurs).. Cleaves peptides in various proteins in a process that requires ATP hydrolysis. Has a chymotrypsin-like activity. Plays a major role in the degradation of misfolded proteins. In the absence of CLPP3, modified ClpPR core(s) could be formed, albeit at strongly reduced levels. In Arabidopsis thaliana (Mouse-ear cress), this protein is ATP-dependent Clp protease proteolytic subunit 3, chloroplastic.